The sequence spans 590 residues: Plasmepsin V (590 aa).

The Lumenal segment spans residues 1 to 544 (MNNYFLRKEN…EKENIFLKVS (544 aa)). Residues 33–81 (CNNVENKIDNVGKKIENVGKKIGDMENKNDNVENKNDNVGNKNDNVKNA) are a coiled coil. In terms of domain architecture, Peptidase A1 spans 100-514 (YFLDIDIGKP…DLQQNQIAFI (415 aa)). The active site involves aspartate 118. 7 cysteine pairs are disulfide-bonded: cysteine 128-cysteine 211, cysteine 131-cysteine 134, cysteine 155-cysteine 166, cysteine 160-cysteine 171, cysteine 259-cysteine 518, cysteine 389-cysteine 434, and cysteine 443-cysteine 479. Residues 282–291 (KEKQKMDKSD) show a composition bias toward basic and acidic residues. Residues 282–316 (KEKQKMDKSDNNSSNKGNVSIKLKNNDKNDDEENN) form a disordered region. The segment covering 292–304 (NNSSNKGNVSIKL) has biased composition (low complexity). The active site involves aspartate 365. The helical transmembrane segment at 545–565 (YINLYCLWLLLALTILLSLIL) threads the bilayer. Over 566–590 (YVRKMFYMDYFPLSDQNKSPIQEST) the chain is Cytoplasmic.

The protein belongs to the peptidase A1 family. In terms of assembly, component of a complex composed of SPC25 and PMV; the interaction is mediated via the transmembrane domains. The complex interacts with the SEC61 channel-forming translocon complex and is involved in the recognition and import of PEXEL motif-containing proteins into the ER for subsequent export. Post-translationally, it is not clear if the zymogen has a cleavable propeptide. In vitro, appears to be cleaved between Asn-80 and Ala-81. Cleavage of the putative propeptide is dispensable for catalytic activity.

The protein localises to the endoplasmic reticulum membrane. Its activity is regulated as follows. Inhibited by peptidomimetic inhibitor WEHI-842. Inhibited by Cu(2+) and Hg(2+). Its function is as follows. During the asexual blood stage, plays an essential role in the export of several proteins into the host erythrocytes by cleaving the pentameric localization motif RxLxE/Q/D (termed Plasmodium export element (PEXEL)) located downstream of the N-terminal secretory signal sequence. Specifically, cleaves after the leucine residue in the RxLxE/Q/D (or RxLxxE) motif of exported proteins including RESA, EMP2, EMP3, KAHRP, RIF/Rifin and STEVOR. Also, by regulating protein export, plays an essential role in gametocyte development and thus, parasite transmission to the mosquito vector. The protein is Plasmepsin V of Plasmodium falciparum (isolate 3D7).